A 209-amino-acid polypeptide reads, in one-letter code: Large ribosomal subunit protein uL3 (209 aa).

A disordered region spans residues 127-151 (SGGPSSHGSKFHRHLGGTGQATTPA).

This sequence belongs to the universal ribosomal protein uL3 family. In terms of assembly, part of the 50S ribosomal subunit. Forms a cluster with proteins L14 and L19.

One of the primary rRNA binding proteins, it binds directly near the 3'-end of the 23S rRNA, where it nucleates assembly of the 50S subunit. In Borrelia duttonii (strain Ly), this protein is Large ribosomal subunit protein uL3.